The primary structure comprises 612 residues: Anaerobic magnesium-protoporphyrin IX monomethyl ester cyclase (612 aa).

Residues asparagine 9–glutamate 143 form the B12-binding domain. Residues proline 190–glutamate 417 enclose the Radical SAM core domain. Residues cysteine 204, cysteine 208, and cysteine 211 each contribute to the [4Fe-4S] cluster site.

This sequence belongs to the BchE family. It depends on [4Fe-4S] cluster as a cofactor. Adenosylcob(III)alamin is required as a cofactor.

The catalysed reaction is Mg-protoporphyrin IX 13-monomethyl ester + 3 S-adenosyl-L-methionine + H2O = 3,8-divinyl protochlorophyllide a + 3 5'-deoxyadenosine + 3 L-methionine + 4 H(+). It functions in the pathway porphyrin-containing compound metabolism; bacteriochlorophyll biosynthesis (light-independent). In terms of biological role, involved in the tetrapyrrole biosynthetic pathways leading to chlorophyll and bacteriochlorophyll (BChl). Catalyzes the anaerobic formation of the isocyclic ring (E-ring) in Mg-protoporphyrin monomethyl ester (MPE) to yield protochlorophyllide a (PChlide a) via a six-electron oxidation and the formation of an oxo group at position C13 using oxygen from a water molecule. In Cereibacter sphaeroides (strain ATCC 17023 / DSM 158 / JCM 6121 / CCUG 31486 / LMG 2827 / NBRC 12203 / NCIMB 8253 / ATH 2.4.1.) (Rhodobacter sphaeroides), this protein is Anaerobic magnesium-protoporphyrin IX monomethyl ester cyclase.